The sequence spans 243 residues: UPF0758 protein AM1_4368 (243 aa).

The MPN domain occupies 113-235 (VIDDPAVAAA…FTSLRQTTSL (123 aa)). Zn(2+) contacts are provided by His184, His186, and Asp197. The JAMM motif motif lies at 184 to 197 (HNHPSGQTDPSPED).

This sequence belongs to the UPF0758 family.

This is UPF0758 protein AM1_4368 from Acaryochloris marina (strain MBIC 11017).